A 38-amino-acid polypeptide reads, in one-letter code: Large ribosomal subunit protein bL36 (38 aa).

It belongs to the bacterial ribosomal protein bL36 family.

The chain is Large ribosomal subunit protein bL36 from Flavobacterium johnsoniae (strain ATCC 17061 / DSM 2064 / JCM 8514 / BCRC 14874 / CCUG 350202 / NBRC 14942 / NCIMB 11054 / UW101) (Cytophaga johnsonae).